The following is a 404-amino-acid chain: Probable tRNA sulfurtransferase (404 aa).

Residues glutamine 60–glutamate 165 form the THUMP domain. Residues methionine 183 to leucine 184, histidine 208 to phenylalanine 209, arginine 265, glycine 287, and glutamine 296 contribute to the ATP site.

This sequence belongs to the ThiI family.

The protein resides in the cytoplasm. The enzyme catalyses [ThiI sulfur-carrier protein]-S-sulfanyl-L-cysteine + a uridine in tRNA + 2 reduced [2Fe-2S]-[ferredoxin] + ATP + H(+) = [ThiI sulfur-carrier protein]-L-cysteine + a 4-thiouridine in tRNA + 2 oxidized [2Fe-2S]-[ferredoxin] + AMP + diphosphate. It carries out the reaction [ThiS sulfur-carrier protein]-C-terminal Gly-Gly-AMP + S-sulfanyl-L-cysteinyl-[cysteine desulfurase] + AH2 = [ThiS sulfur-carrier protein]-C-terminal-Gly-aminoethanethioate + L-cysteinyl-[cysteine desulfurase] + A + AMP + 2 H(+). The protein operates within cofactor biosynthesis; thiamine diphosphate biosynthesis. Catalyzes the ATP-dependent transfer of a sulfur to tRNA to produce 4-thiouridine in position 8 of tRNAs, which functions as a near-UV photosensor. Also catalyzes the transfer of sulfur to the sulfur carrier protein ThiS, forming ThiS-thiocarboxylate. This is a step in the synthesis of thiazole, in the thiamine biosynthesis pathway. The sulfur is donated as persulfide by IscS. The polypeptide is Probable tRNA sulfurtransferase (Streptococcus pyogenes serotype M4 (strain MGAS10750)).